The following is a 425-amino-acid chain: Glucose-6-phosphate 1-dehydrogenase (425 aa).

Positions 44 and 135 each coordinate NADP(+). Substrate contacts are provided by histidine 165, lysine 169, glutamate 201, and aspartate 220. Residue histidine 225 is the Proton acceptor of the active site. Lysine 311 lines the substrate pocket.

This sequence belongs to the glucose-6-phosphate dehydrogenase family.

The enzyme catalyses D-glucose 6-phosphate + NADP(+) = 6-phospho-D-glucono-1,5-lactone + NADPH + H(+). It participates in carbohydrate degradation; pentose phosphate pathway; D-ribulose 5-phosphate from D-glucose 6-phosphate (oxidative stage): step 1/3. In terms of biological role, catalyzes the oxidation of glucose 6-phosphate to 6-phosphogluconolactone. The polypeptide is Glucose-6-phosphate 1-dehydrogenase (Helicobacter pylori (strain J99 / ATCC 700824) (Campylobacter pylori J99)).